The sequence spans 329 residues: Taste receptor type 2 member 134 (329 aa).

The Extracellular portion of the chain corresponds to 1–27 (MRCSLRGCVQGRGGKSGVSLSKFSPKK). Residues 28–48 (MSFFFIFMVIFCIQSLVALLQ) form a helical membrane-spanning segment. Residues 49 to 68 (NGFLATVLGREWVRSQGLPA) are Cytoplasmic-facing. Residues 69–89 (GDMIVACLAASRFCLHGVAIV) traverse the membrane as a helical segment. Residues 90-121 (NNFLTFVKLWSQKIYFSVLWDFVNTVNFWCTT) are Extracellular-facing. The chain crosses the membrane as a helical span at residues 122–142 (WLAIFYCVKISSFSHPIFFWI). Topologically, residues 143–153 (KWRISRSVPRL) are cytoplasmic. The chain crosses the membrane as a helical span at residues 154-174 (LLGSLVIGGLSAVSSATGNTI). The Extracellular portion of the chain corresponds to 175–201 (AFQMTACENYTLAYRTRAFYAYYFRCH). Asparagine 183 is a glycosylation site (N-linked (GlcNAc...) asparagine). A helical membrane pass occupies residues 202–222 (AMLMWIIPFFLFLLSVILLMF). Residues 223-251 (SLYRHLEHMRYRRPWSHDYSTQAHTMALK) are Cytoplasmic-facing. A helical transmembrane segment spans residues 252 to 272 (SLAFFLVFYTSYVLFLVISVT). Residues 273–282 (RVVNVHSSWH) are Extracellular-facing. A helical membrane pass occupies residues 283-303 (WAWEVITYMGILLHSTILTLS). The Cytoplasmic segment spans residues 304–329 (NPKMRKALKIKFPDLCVARSQDKRRG).

Belongs to the G-protein coupled receptor T2R family. As to expression, expressed in tongue and gastrointestinal tract.

It localises to the membrane. Functionally, putative taste receptor which may play a role in the perception of bitterness. This Rattus norvegicus (Rat) protein is Taste receptor type 2 member 134.